We begin with the raw amino-acid sequence, 1368 residues long: DNA-directed RNA polymerase subunit beta (1368 aa).

Belongs to the RNA polymerase beta chain family. In terms of assembly, the RNAP catalytic core consists of 2 alpha, 1 beta, 1 beta' and 1 omega subunit. When a sigma factor is associated with the core the holoenzyme is formed, which can initiate transcription.

The enzyme catalyses RNA(n) + a ribonucleoside 5'-triphosphate = RNA(n+1) + diphosphate. Functionally, DNA-dependent RNA polymerase catalyzes the transcription of DNA into RNA using the four ribonucleoside triphosphates as substrates. The chain is DNA-directed RNA polymerase subunit beta from Burkholderia ambifaria (strain ATCC BAA-244 / DSM 16087 / CCUG 44356 / LMG 19182 / AMMD) (Burkholderia cepacia (strain AMMD)).